Reading from the N-terminus, the 402-residue chain is CCA-adding enzyme (402 aa).

Residues glycine 32 and arginine 35 each contribute to the ATP site. 2 residues coordinate CTP: glycine 32 and arginine 35. Residues aspartate 45 and aspartate 47 each contribute to the Mg(2+) site. Residues arginine 119, aspartate 162, arginine 165, arginine 168, and arginine 171 each coordinate ATP. CTP-binding residues include arginine 119, aspartate 162, arginine 165, arginine 168, and arginine 171.

It belongs to the tRNA nucleotidyltransferase/poly(A) polymerase family. Bacterial CCA-adding enzyme type 3 subfamily. Homodimer. It depends on Mg(2+) as a cofactor.

It catalyses the reaction a tRNA precursor + 2 CTP + ATP = a tRNA with a 3' CCA end + 3 diphosphate. The catalysed reaction is a tRNA with a 3' CCA end + 2 CTP + ATP = a tRNA with a 3' CCACCA end + 3 diphosphate. Its function is as follows. Catalyzes the addition and repair of the essential 3'-terminal CCA sequence in tRNAs without using a nucleic acid template. Adds these three nucleotides in the order of C, C, and A to the tRNA nucleotide-73, using CTP and ATP as substrates and producing inorganic pyrophosphate. tRNA 3'-terminal CCA addition is required both for tRNA processing and repair. Also involved in tRNA surveillance by mediating tandem CCA addition to generate a CCACCA at the 3' terminus of unstable tRNAs. While stable tRNAs receive only 3'-terminal CCA, unstable tRNAs are marked with CCACCA and rapidly degraded. This Lactococcus lactis subsp. cremoris (strain SK11) protein is CCA-adding enzyme.